We begin with the raw amino-acid sequence, 372 residues long: Chorismate synthase (372 aa).

Arg48 lines the NADP(+) pocket. Residues 125–127 (RSS), Gly285, 300–304 (KPTPS), and Arg327 contribute to the FMN site.

It belongs to the chorismate synthase family. FMNH2 serves as cofactor.

The catalysed reaction is 5-O-(1-carboxyvinyl)-3-phosphoshikimate = chorismate + phosphate. It functions in the pathway metabolic intermediate biosynthesis; chorismate biosynthesis; chorismate from D-erythrose 4-phosphate and phosphoenolpyruvate: step 7/7. In terms of biological role, catalyzes the anti-1,4-elimination of the C-3 phosphate and the C-6 proR hydrogen from 5-enolpyruvylshikimate-3-phosphate (EPSP) to yield chorismate, which is the branch point compound that serves as the starting substrate for the three terminal pathways of aromatic amino acid biosynthesis. This reaction introduces a second double bond into the aromatic ring system. The protein is Chorismate synthase of Methanocella arvoryzae (strain DSM 22066 / NBRC 105507 / MRE50).